The sequence spans 312 residues: Ribosomal RNA small subunit methyltransferase H (312 aa).

Residues 33–35 (GGH), aspartate 53, phenylalanine 80, aspartate 101, and glutamine 108 contribute to the S-adenosyl-L-methionine site.

The protein belongs to the methyltransferase superfamily. RsmH family.

Its subcellular location is the cytoplasm. The catalysed reaction is cytidine(1402) in 16S rRNA + S-adenosyl-L-methionine = N(4)-methylcytidine(1402) in 16S rRNA + S-adenosyl-L-homocysteine + H(+). In terms of biological role, specifically methylates the N4 position of cytidine in position 1402 (C1402) of 16S rRNA. The chain is Ribosomal RNA small subunit methyltransferase H from Desulfosudis oleivorans (strain DSM 6200 / JCM 39069 / Hxd3) (Desulfococcus oleovorans).